The primary structure comprises 187 residues: MGVGFGYTEYTDTFNRKYVNNVINFKKTQIKDSVKTKLSDIISKGYSYNKYIKICKYSVEALEIVKKCLFCKNFLCKIKVFKRIKKHIHVKFFHNDYVDKIKEKFNKLVNKSLKKQINHVCLNSEISLKKKLKVLCLTHNYNIIFEDYGYNFKCKVYGWHVYKKRLDFGNEENVKNGKYCIFTMLEY.

Gly2 carries N-myristoyl glycine; by host lipidation.

Belongs to the mimivirus L332/L333/L334 family.

This is an uncharacterized protein from Acanthamoeba polyphaga (Amoeba).